A 228-amino-acid chain; its full sequence is Prepilin leader peptidase/N-methyltransferase (228 aa).

6 helical membrane passes run 18-38, 95-115, 116-136, 147-167, 168-188, and 204-224; these read LWGS…NVVI, RYPL…YLMA, PGVP…LAAI, LTLP…YVPL, AEAV…YWVF, and LLAA…LLLA.

Belongs to the peptidase A24 family.

It localises to the cell inner membrane. The enzyme catalyses Typically cleaves a -Gly-|-Phe- bond to release an N-terminal, basic peptide of 5-8 residues from type IV prepilin, and then N-methylates the new N-terminal amino group, the methyl donor being S-adenosyl-L-methionine.. In terms of biological role, plays an essential role in type IV pili and type II pseudopili formation by proteolytically removing the leader sequence from substrate proteins and subsequently monomethylating the alpha-amino group of the newly exposed N-terminal phenylalanine. The polypeptide is Prepilin leader peptidase/N-methyltransferase (pulO) (Klebsiella pneumoniae).